The chain runs to 693 residues: Protein-glutamine gamma-glutamyltransferase E (693 aa).

The residue at position 111 (Y111) is a Phosphotyrosine. A Phosphothreonine modification is found at T112. Positions 222, 225, 227, and 228 each coordinate Ca(2+). Residue C273 is part of the active site. Ca(2+)-binding residues include D302, D304, N306, S308, and D325. Residues H331 and D354 contribute to the active site. Residues N394, T416, E444, and E449 each contribute to the Ca(2+) site. The segment at 455–482 (KAMNKLKPNASFGATSSRGPQGEEKEPS) is disordered.

Belongs to the transglutaminase superfamily. Transglutaminase family. As to quaternary structure, consists of two polypeptide chains, which are synthesized as a precursor form of a single polypeptide. Ca(2+) is required as a cofactor. In terms of processing, activated by proteolytic processing. In vitro activation is commonly achieved by cleavage with dispase, a neutral bacterial protease. Physiological activation may be catalyzed by CTSL and, to a lesser extent, by CTSS.

Its subcellular location is the cytoplasm. It catalyses the reaction L-glutaminyl-[protein] + L-lysyl-[protein] = [protein]-L-lysyl-N(6)-5-L-glutamyl-[protein] + NH4(+). In terms of biological role, catalyzes the calcium-dependent formation of isopeptide cross-links between glutamine and lysine residues in various proteins, as well as the conjugation of polyamines to proteins. Involved in the formation of the cornified envelope (CE), a specialized component consisting of covalent cross-links of proteins beneath the plasma membrane of terminally differentiated keratinocytes. Catalyzes small proline-rich proteins and LOR cross-linking to form small interchain oligomers, which are further cross-linked by TGM1 onto the growing CE scaffold. In hair follicles, involved in cross-linking structural proteins to hardening the inner root sheath. In Rattus norvegicus (Rat), this protein is Protein-glutamine gamma-glutamyltransferase E (Tgm3).